Consider the following 481-residue polypeptide: MSPQTETKTSVGFKAGVKDYKLTYYTPDYETKATDILAAFRVTPQPGVPPEEAGAAVAAESSTGTWTTVWTDGLTSLDRYKGRCYHIERVFGEKDQYIAYVAYPLDLFEEGSVTNMFTSIVGNVFGFKALRALRLEDLRIPAAYTKTFQGPPHGIQVERDKLNKYGRPLLGCTIKPKLGLSAKNYGRAVYECLRGGLDFTKDDENVNSQPFMRWRDRFLFCAEAIYKSQAETGEIKGHYLNATAGTCEEMLRRAYFAKELGVPIIMHDYLTGGFTANTSLAHFCRENGLLLHIHRAMHAVIDRQKNHGIHFRVLAKALRLSGGDHIHAGTVVGKLEGEREITLGFVDLLRDNFVEKDRSRGIYFTQDWVSLPGVLPVASGGIHVWHMPALTDIFGDDSVLQFGGGTLGHPWGNAPGAVANRVALEACVQARNEGLDLAQDGNSIIRQASKWSPELAAACEVWKEIQFNFKSVDTLDLNEIK.

Positions 1 to 2 (MS) are excised as a propeptide. An N-acetylproline modification is found at P3. The residue at position 14 (K14) is an N6,N6,N6-trimethyllysine. 2 residues coordinate substrate: N123 and T173. K175 functions as the Proton acceptor in the catalytic mechanism. Position 177 (K177) interacts with substrate. Residues K201, D203, and E204 each coordinate Mg(2+). K201 is modified (N6-carboxylysine). H294 (proton acceptor) is an active-site residue. Residues R295, H327, and S379 each coordinate substrate.

This sequence belongs to the RuBisCO large chain family. Type I subfamily. Heterohexadecamer of 8 large chains and 8 small chains; disulfide-linked. The disulfide link is formed within the large subunit homodimers. Mg(2+) serves as cofactor. Post-translationally, the disulfide bond which can form in the large chain dimeric partners within the hexadecamer appears to be associated with oxidative stress and protein turnover.

Its subcellular location is the plastid. The enzyme catalyses 2 (2R)-3-phosphoglycerate + 2 H(+) = D-ribulose 1,5-bisphosphate + CO2 + H2O. The catalysed reaction is D-ribulose 1,5-bisphosphate + O2 = 2-phosphoglycolate + (2R)-3-phosphoglycerate + 2 H(+). In terms of biological role, ruBisCO catalyzes two reactions: the carboxylation of D-ribulose 1,5-bisphosphate, the primary event in carbon dioxide fixation, as well as the oxidative fragmentation of the pentose substrate in the photorespiration process. Both reactions occur simultaneously and in competition at the same active site. The chain is Ribulose bisphosphate carboxylase large chain from Cuscuta obtusiflora (Peruvian dodder).